A 149-amino-acid chain; its full sequence is Large ribosomal subunit protein bL9 (149 aa).

This sequence belongs to the bacterial ribosomal protein bL9 family.

Binds to the 23S rRNA. The protein is Large ribosomal subunit protein bL9 of Mannheimia succiniciproducens (strain KCTC 0769BP / MBEL55E).